Reading from the N-terminus, the 335-residue chain is Proline-rich protein 1 (335 aa).

A signal peptide spans 1–22 (MAITRASFAICILLSLATIATA). 39 consecutive repeat copies span residues 30–34 (PPVYT), 35–39 (SPVNK), 40–43 (PTLP), 44–48 (PPVYT), 49–53 (PPVHK), 54–57 (PTLP), 58–62 (PPVYT), 63–67 (PPVHK), 68–71 (PTLS), 72–76 (PPVYT), 77–81 (KPTLP), 82–86 (PPAYT), 87–91 (PPVYN), 92–96 (KPTLP), 97–101 (APVYT), 102–106 (PPVYK), 107–110 (PTLS), 111–115 (PPVYT), 116–120 (KPTLL), 121–125 (PPVFK), 126–130 (PTLSP), 131–135 (PVYTK), 136–139 (PTLS), 140–144 (PTVYK), 145–148 (PTLS), 149–153 (PPVNN), 154–158 (KPSLS), 159–163 (PPVYK), 164–167 (PTLS), 168–172 (PPVYT), 173–177 (KPTLP), 178–182 (PPVYK), 184–189 (SPSYSP), 190–194 (PPPFA), 195–200 (PKPTYT), 201–207 (PPTKPYV), 208–212 (PEIIK), 284–288 (SPVET), and 319–323 (PFYFT). The 39 X 5 AA approximate repeats stretch occupies residues 30 to 323 (PPVYTSPVNK…LFNVGPFYFT (294 aa)).

The protein belongs to the plant proline-rich protein superfamily. ENOD12 family. Exclusively expressed in roots, especially in root hairs.

Its subcellular location is the secreted. The protein localises to the cell wall. Functionally, may contribute to cell wall structure in root hairs. In Arabidopsis thaliana (Mouse-ear cress), this protein is Proline-rich protein 1 (PRP1).